The following is a 146-amino-acid chain: Putative pre-16S rRNA nuclease (146 aa).

Belongs to the YqgF nuclease family.

The protein localises to the cytoplasm. In terms of biological role, could be a nuclease involved in processing of the 5'-end of pre-16S rRNA. This Methylobacillus flagellatus (strain ATCC 51484 / DSM 6875 / VKM B-1610 / KT) protein is Putative pre-16S rRNA nuclease.